Here is a 226-residue protein sequence, read N- to C-terminus: PKHD-type hydroxylase TERTU_2553 (226 aa).

Residues 78-177 form the Fe2OG dioxygenase domain; it reads KIYPPKFNCY…RVASFIWIQS (100 aa). 3 residues coordinate Fe cation: histidine 96, aspartate 98, and histidine 158. Residue arginine 168 coordinates 2-oxoglutarate.

Requires Fe(2+) as cofactor. The cofactor is L-ascorbate.

This is PKHD-type hydroxylase TERTU_2553 from Teredinibacter turnerae (strain ATCC 39867 / T7901).